The sequence spans 845 residues: ATP-binding cassette sub-family F member 1 (845 aa).

A disordered region spans residues 1–261; sequence MPKAPKQQPP…HLSKKEKKKL (261 aa). Phosphoserine is present on residues Ser22 and Ser24. Residues 29–39 are compositionally biased toward basic residues; the sequence is KKGKKDKKIKK. Positions 47 to 64 are enriched in basic and acidic residues; it reads VEDKQAGEEEKVLKEKEQ. Basic residues predominate over residues 73-85; sequence QKKKRDTRKGRRK. Phosphoserine is present on Ser105. Thr108 bears the Phosphothreonine mark. Residues Ser109 and Ser140 each carry the phosphoserine; by CK2 modification. Basic and acidic residues predominate over residues 147–160; it reads EKHPPKPAKPEKNR. Residue Ser166 is modified to Phosphoserine. The span at 206–226 shows a compositional bias: basic and acidic residues; the sequence is EIIKEKEPPKQGKEKAKKAEQ. Positions 227-241 are enriched in acidic residues; it reads GSEEEGEGEEEEEEG. Ser228 carries the phosphoserine modification. Positions 304–548 constitute an ABC transporter 1 domain; that stretch reads IKLEKFSISA…MYQQKQKELL (245 aa). 336 to 343 contacts ATP; the sequence is GPNGKGKT. Positions 559 to 580 are enriched in basic and acidic residues; it reads KELKAGGKSTKQAEKQTKEALT. A disordered region spans residues 559 to 602; it reads KELKAGGKSTKQAEKQTKEALTRKQQKCRRKNQDEESQEAPELL. Residue Ser595 is modified to Phosphoserine. The 216-residue stretch at 625–840 folds into the ABC transporter 2 domain; the sequence is LGLHGVTFGY…VLEALGEVMV (216 aa). Residue 658-665 participates in ATP binding; the sequence is GPNGVGKS.

This sequence belongs to the ABC transporter superfamily. ABCF family. EF3 subfamily. Isoform 2 interacts (via N-terminus) with EIF2S1; the interaction is independent of its phosphorylated status. Isoform 2 associates (via both ABC transporter domains) with the ribosomes. Post-translationally, isoform 2 is phosphorylated at phosphoserine and phosphothreonine. Isoform 2 phosphorylation on Ser-109 and Ser-140 by CK2 inhibits association of EIF2 with ribosomes. As to expression, ubiquitous.

It is found in the cytoplasm. It localises to the nucleus. The protein localises to the nucleoplasm. The protein resides in the nucleus envelope. Its function is as follows. Isoform 2 is required for efficient Cap- and IRES-mediated mRNA translation initiation. Isoform 2 is not involved in the ribosome biogenesis. The chain is ATP-binding cassette sub-family F member 1 (ABCF1) from Homo sapiens (Human).